The primary structure comprises 288 residues: HTH-type transcriptional regulator CzcR (288 aa).

Positions 1–58 constitute an HTH lysR-type domain; sequence MELRDLQIFQSVADQGSVSSAAKELNYVQSNVTARIKQLENELKTPLFYRHKRGMTLT. A DNA-binding region (H-T-H motif) is located at residues 18 to 37; it reads VSSAAKELNYVQSNVTARIK.

The protein belongs to the LysR transcriptional regulatory family.

The polypeptide is HTH-type transcriptional regulator CzcR (czcR) (Bacillus cereus (strain ATCC 10987 / NRS 248)).